A 363-amino-acid polypeptide reads, in one-letter code: Cobalt-precorrin-5B C(1)-methyltransferase (363 aa).

Belongs to the CbiD family.

It catalyses the reaction Co-precorrin-5B + S-adenosyl-L-methionine = Co-precorrin-6A + S-adenosyl-L-homocysteine. The protein operates within cofactor biosynthesis; adenosylcobalamin biosynthesis; cob(II)yrinate a,c-diamide from sirohydrochlorin (anaerobic route): step 6/10. In terms of biological role, catalyzes the methylation of C-1 in cobalt-precorrin-5B to form cobalt-precorrin-6A. This chain is Cobalt-precorrin-5B C(1)-methyltransferase, found in Burkholderia pseudomallei (strain K96243).